A 337-amino-acid chain; its full sequence is Fructose-1,6-bisphosphatase class 1 (337 aa).

Positions 94, 116, 118, and 119 each coordinate Mg(2+). Residues 119–122, Asn-210, and Lys-276 contribute to the substrate site; that span reads DGSS. Mg(2+) is bound at residue Glu-282.

This sequence belongs to the FBPase class 1 family. Homotetramer. It depends on Mg(2+) as a cofactor.

The protein resides in the cytoplasm. It carries out the reaction beta-D-fructose 1,6-bisphosphate + H2O = beta-D-fructose 6-phosphate + phosphate. Its pathway is carbohydrate biosynthesis; gluconeogenesis. The chain is Fructose-1,6-bisphosphatase class 1 from Burkholderia cenocepacia (strain HI2424).